Here is an 835-residue protein sequence, read N- to C-terminus: BCL11 transcription factor A (835 aa).

Over residues 1–12 (MSRRKQGKPQHL) the composition is skewed to basic residues. Positions 1-41 (MSRRKQGKPQHLSKREFSPEPLEAILTDDEPDHGPLGAPEG) are disordered. Residues 1–210 (MSRRKQGKPQ…SEHGSPLTPR (210 aa)) are required for nuclear body formation and for SUMO1 recruitment. The C2HC-type zinc finger occupies 45 to 71 (LLTCGQCQMNFPLGDILIFIEHKRKQC). 4 residues coordinate Zn(2+): C48, C51, H66, and C71. S86 carries the post-translational modification Phosphoserine. K123 participates in a covalent cross-link: Glycyl lysine isopeptide (Lys-Gly) (interchain with G-Cter in SUMO2). Position 162 is a phosphothreonine (I162). K164 participates in a covalent cross-link: Glycyl lysine isopeptide (Lys-Gly) (interchain with G-Cter in SUMO2). The C2H2-type 1 zinc finger occupies 170–193 (YTCTTCKQPFTSAWFLLQHAQNTH). S205 is modified (phosphoserine). A Phosphothreonine modification is found at P214. R271 is modified (asymmetric dimethylarginine). Residues 323-376 (AGNTSSPPLSPGRPSPMQRLLQPFQPGSKPPFLATPPLPPLQSAPPPSQPPVKS) form a disordered region. Phosphoserine occurs at positions 332 and 337. Residues 355 to 372 (LATPPLPPLQSAPPPSQP) show a composition bias toward pro residues. 2 C2H2-type zinc fingers span residues 377 to 399 (KSCE…RRSH) and 405 to 429 (YKCN…THMH). Residues 421–430 (KRHMKTHMHK) show a composition bias toward basic residues. 3 disordered regions span residues 421–458 (KRHM…LVGS), 471–512 (KSEN…ERVD), and 572–619 (RSHL…GLSK). Over residues 441–450 (GLSTASSPEP) the composition is skewed to polar residues. Phosphoserine occurs at positions 446 and 447. The span at 482–506 (NGDEEEEEDDEEEEEEEEEEEEELT) shows a compositional bias: acidic residues. Over residues 574-584 (HLAEAEGHRDT) the composition is skewed to basic and acidic residues. S608 carries the phosphoserine modification. K620 participates in a covalent cross-link: Glycyl lysine isopeptide (Lys-Gly) (interchain with G-Cter in SUMO2). Residues S625 and S630 each carry the phosphoserine modification. K634 is covalently cross-linked (Glycyl lysine isopeptide (Lys-Gly) (interchain with G-Cter in SUMO1)). Residues 682–696 (SPFASSSEHSSENGS) are compositionally biased toward low complexity. At T701 the chain carries Phosphothreonine. The span at 706 to 720 (LDGGISGRSGTGSGG) shows a compositional bias: gly residues. A DNA-binding region spans residues 737-835 (EGRRSDTCEY…RVLNNDIKTE (99 aa)). Residues 742–764 (DTCEYCGKVFKNCSNLTVHRRSH) form a C2H2-type 4 zinc finger. Zn(2+)-binding residues include C744, C747, H760, and H764. The segment covering 764 to 773 (HTGERPYKCE) has biased composition (polar residues). The segment at 765–769 (TGERP) is disordered. The C2H2-type 5 zinc-finger motif lies at 770–792 (YKCELCNYACAQSSKLTRHMKTH). C772, C775, H788, and H792 together coordinate Zn(2+). Residues 793 to 799 (GQVGKDV) form a disordered region. The segment at 800–823 (YKCEICKMPFSVYSTLEKHMKKWH) adopts a C2H2-type 6 zinc-finger fold. C802, C805, H818, and H823 together coordinate Zn(2+).

In terms of assembly, homotetrameric; self-associates via C2HC-type zinc finger domain. Interacts with MTA2, a component of the nucleosome remodeling and deacetylase (NuRD) repressor complex. Interacts with NR2F1, PIAS3, NR2F2 and NR2F6. Interacts with TBR1. In terms of processing, sumoylated with SUMO1. As to expression, isoforms are expressed in a tissue-specific fashion. Isoforms 1, isoform 2, and isoform 3 are expressed at similar levels in testis, kidney and spleen. Isoform 1 is expressed in the stomach, and isoform 2 is expressed exclusively in the lung. Overexpression following proviral integration in hematopoietic cells results in the generation of myeloid leukemia.

The protein localises to the cytoplasm. It is found in the nucleus. Its function is as follows. Transcription factor. Associated with the BAF SWI/SNF chromatin remodeling complex. Binds to the 5'-TGACCA-3' sequence motif in regulatory regions of target genes. Involved in brain development. May play a role in hematopoiesis. Essential factor in lymphopoiesis, required for B-cell formation in fetal liver. May function as a modulator of the transcriptional repression activity of NR2F2. This Mus musculus (Mouse) protein is BCL11 transcription factor A (Bcl11a).